A 278-amino-acid polypeptide reads, in one-letter code: Prohibitin-7, mitochondrial (278 aa).

The Mitochondrial matrix portion of the chain corresponds to 1-14 (MNVKKVPNVPGSPA). The helical; Signal-anchor for type II membrane protein transmembrane segment at 15–37 (LSALLKLGVIGGLGLYCIGSSMY) threads the bilayer. Residues 38–278 (NVDGGHRAIV…NSSDLLISKQ (241 aa)) are Mitochondrial intermembrane-facing. Positions 186–220 (KEFTEAIEKKQVAAQEAERAKFIVEKAEQDKKSAI) form a coiled coil.

Belongs to the prohibitin family. In terms of assembly, component of a prohibitin multimeric complex in mitochondrial membranes.

Its subcellular location is the mitochondrion inner membrane. Prohibitin probably acts as a holdase/unfoldase for the stabilization of newly synthesized mitochondrial proteins. The polypeptide is Prohibitin-7, mitochondrial (PHB7) (Arabidopsis thaliana (Mouse-ear cress)).